The following is a 2254-amino-acid chain: Voltage-dependent T-type calcium channel subunit alpha-1G (2254 aa).

The disordered stretch occupies residues 1–48 (MDEEEDGAGAEESGQPRSFTQLNDLSGAGGRQGPGSTEKDPGSADSEA). Residues 1–80 (MDEEEDGAGA…RSWCLRTVCN (80 aa)) are Cytoplasmic-facing. The span at 15 to 24 (QPRSFTQLND) shows a compositional bias: polar residues. An I repeat occupies 68 to 398 (SRPRSWCLRT…LCLVVIATQF (331 aa)). A helical membrane pass occupies residues 81-101 (PWFERVSMLVILLNCVTLGMF). Residues 102–119 (RPCEDIACDSQRCRILQA) are Extracellular-facing. Residues 120 to 141 (FDDFIFAFFAVEMVVKMVALGI) traverse the membrane as a helical segment. Over 142 to 150 (FGKKCYLGD) the chain is Cytoplasmic. The helical transmembrane segment at 151 to 170 (TWNRLDFFIVIAGMLEYSLD) threads the bilayer. Residues 171–175 (LQNVS) are Extracellular-facing. The N-linked (GlcNAc...) asparagine glycan is linked to Asn173. Residues 176–193 (FSAVRTVRVLRPLRAINR) form a helical membrane-spanning segment. Residues 194–213 (VPSMRILVTLLLDTLPMLGN) lie on the Cytoplasmic side of the membrane. Residues 214–234 (VLLLCFFVFFIFGIVGVQLWA) traverse the membrane as a helical segment. The Extracellular portion of the chain corresponds to 235-370 (GLLRNRCFLP…YFVMDAHSFY (136 aa)). Residues Asn246, Asn306, Asn310, and Asn322 are each glycosylated (N-linked (GlcNAc...) asparagine). The helical transmembrane segment at 371–395 (NFIYFILLIIVGSFFMINLCLVVIA) threads the bilayer. The Cytoplasmic segment spans residues 396–744 (TQFSETKQRE…DTFRKIVDSK (349 aa)). Ser467 carries the phosphoserine modification. Basic residues predominate over residues 494-506 (LVHHHHHHHHHYH). Disordered regions lie at residues 494–513 (LVHH…GTLR), 525–553 (DANG…AESV), 579–598 (ASGR…TSPP), and 699–721 (DAQH…GPDA). Positions 534–545 (LPPPSTPTPSGG) are enriched in pro residues. Ser716 is modified (phosphoserine). One copy of the II repeat lies at 730 to 968 (WRLICDTFRK…LLVAILVEGF (239 aa)). The helical transmembrane segment at 745–765 (YFGRGIMIAILVNTLSMGIEY) threads the bilayer. At 766 to 778 (HEQPEELTNALEI) the chain is on the extracellular side. Residues 779–800 (SNIVFTSLFALEMLLKLLVYGP) traverse the membrane as a helical segment. At 801-806 (FGYIKN) the chain is on the cytoplasmic side. A helical membrane pass occupies residues 807 to 825 (PYNIFDGVIVVISVWEIVG). Over 826 to 833 (QQGGGLSV) the chain is Extracellular. Residues 834–857 (LRTFRLMRVLKLVRFLPALQRQLV) form a helical membrane-spanning segment. The Cytoplasmic portion of the chain corresponds to 858 to 868 (VLMKTMDNVAT). A helical transmembrane segment spans residues 869–889 (FCMLLMLFIFIFSILGMHLFG). The Extracellular segment spans residues 890-940 (CKFASERDGDTLPDRKNFDSLLWAIVTVFQILTQEDWNKVLYNGMASTSSW). Residues 941-965 (AALYFIALMTFGNYVLFNLLVAILV) traverse the membrane as a helical segment. The Cytoplasmic segment spans residues 966–1251 (EGFQAEGDAT…SRFRLLCHRI (286 aa)). Residues 1024-1209 (TPMSHPKSSS…GDDDNDEGNL (186 aa)) form a disordered region. 2 stretches are compositionally biased toward low complexity: residues 1041 to 1052 (GSGSRRTSSSGS) and 1065 to 1091 (PPSA…SRNS). 2 stretches are compositionally biased toward acidic residues: residues 1117–1126 (ESQDEEESSE) and 1196–1206 (PQLDGDDDNDE). 3 positions are modified to phosphoserine: Ser1118, Ser1124, and Ser1125. Residues 1242–1519 (SRFRLLCHRI…MFVGVVVENF (278 aa)) form an III repeat. The helical transmembrane segment at 1252-1274 (ITHKMFDHVVLVIIFLNCITIAM) threads the bilayer. Residues 1275-1292 (ERPKIDPHSAERIFLTLS) are Extracellular-facing. Residues 1293–1313 (NYIFTAVFLAEMTVKVVALGW) traverse the membrane as a helical segment. The Cytoplasmic portion of the chain corresponds to 1314–1323 (CFGEQAYLRS). The helical transmembrane segment at 1324-1343 (SWNVLDGLLVLISVIDILVS) threads the bilayer. The Extracellular segment spans residues 1344-1357 (MVSDSGTKILGMLR). Residues 1358–1379 (VLRLLRTLRPLRVISRAQGLKL) form a helical membrane-spanning segment. Topologically, residues 1380-1389 (VVETLMSSLK) are cytoplasmic. A helical membrane pass occupies residues 1390 to 1413 (PIGNIVVICCAFFIIFGILGVQLF). Residues 1414–1490 (KGKFFVCQGE…DQQPIMNHNP (77 aa)) are Extracellular-facing. 2 N-linked (GlcNAc...) asparagine glycosylation sites follow: Asn1427 and Asn1430. Residues 1491–1516 (WMLLYFISFLLIVAFFVLNMFVGVVV) traverse the membrane as a helical segment. Over 1517–1578 (ENFHKCRQHQ…RLLVHHLCTS (62 aa)) the chain is Cytoplasmic. The stretch at 1564 to 1822 (DYSRFRLLVH…VVIAVLMKHL (259 aa)) is one IV repeat. The chain crosses the membrane as a helical span at residues 1579–1599 (HYLDLFITGVIGLNVVTMAME). The Extracellular portion of the chain corresponds to 1600–1613 (HYQQPQILDEALKI). Residues 1614–1635 (CNYIFTVIFVFESVFKLVAFGF) traverse the membrane as a helical segment. Over 1636–1642 (RRFFQDR) the chain is Cytoplasmic. The chain crosses the membrane as a helical span at residues 1643-1661 (WNQLDLAIVLLSIMGITLE). The Extracellular portion of the chain corresponds to 1662 to 1675 (EIEVNLSLPINPTI). Asn1666 is a glycosylation site (N-linked (GlcNAc...) asparagine). A helical transmembrane segment spans residues 1676–1699 (IRIMRVLRIARVLKLLKMAVGMRA). At 1700–1713 (LLHTVMQALPQVGN) the chain is on the cytoplasmic side. The helical transmembrane segment at 1714 to 1734 (LGLLFMLLFFIFAALGVELFG) threads the bilayer. The Extracellular portion of the chain corresponds to 1735-1794 (DLECDETHPCEGLGRHATFRNFGMAFLTLFRVSTGDNWNGIMKDTLRDCDQESTCYNTVI). The helical transmembrane segment at 1795 to 1822 (SPIYFVSFVLTAQFVLVNVVIAVLMKHL) threads the bilayer. Residues 1823–2254 (EESNKEAKEE…LSSDPTDMDP (432 aa)) lie on the Cytoplasmic side of the membrane. Positions 2153–2254 (DSGSQPRLCP…LSSDPTDMDP (102 aa)) are disordered. Low complexity predominate over residues 2184–2193 (SPPSISIDPP). Polar residues-rich tracts occupy residues 2220 to 2232 (PSVS…TAAS) and 2240 to 2254 (LSLS…DMDP).

It belongs to the calcium channel alpha-1 subunit (TC 1.A.1.11) family. CACNA1G subfamily. Post-translationally, in response to raising of intracellular calcium, the T-type channels are activated by CaM-kinase II. Highly expressed in brain. Moderate expression in heart; low expression in placenta, kidney and lung.

Its subcellular location is the cell membrane. The protein localises to the cytoplasm. The enzyme catalyses Ca(2+)(in) = Ca(2+)(out). Functionally, voltage-sensitive calcium channels (VSCC) mediate the entry of calcium ions into excitable cells and are also involved in a variety of calcium-dependent processes, including muscle contraction, hormone or neurotransmitter release, gene expression, cell motility, cell division and cell death. The isoform alpha-1G gives rise to T-type calcium currents. T-type calcium channels belong to the 'low-voltage activated (LVA)' group and are strongly blocked by nickel and mibefradil. A particularity of this type of channels is an opening at quite negative potentials and a voltage-dependent inactivation. T-type channels serve pacemaking functions in both central neurons and cardiac nodal cells and support calcium signaling in secretory cells and vascular smooth muscle. They may also be involved in the modulation of firing patterns of neurons which is important for information processing as well as in cell growth processes. This chain is Voltage-dependent T-type calcium channel subunit alpha-1G (Cacna1g), found in Rattus norvegicus (Rat).